A 429-amino-acid chain; its full sequence is Glutamate-1-semialdehyde 2,1-aminomutase (429 aa).

Residue Lys267 is modified to N6-(pyridoxal phosphate)lysine.

The protein belongs to the class-III pyridoxal-phosphate-dependent aminotransferase family. HemL subfamily. As to quaternary structure, homodimer. Pyridoxal 5'-phosphate is required as a cofactor.

It is found in the cytoplasm. The catalysed reaction is (S)-4-amino-5-oxopentanoate = 5-aminolevulinate. It participates in porphyrin-containing compound metabolism; protoporphyrin-IX biosynthesis; 5-aminolevulinate from L-glutamyl-tRNA(Glu): step 2/2. This Anaeromyxobacter sp. (strain Fw109-5) protein is Glutamate-1-semialdehyde 2,1-aminomutase.